Reading from the N-terminus, the 285-residue chain is Phospholipid phosphatase 1 (285 aa).

The Cytoplasmic segment spans residues 1–6 (MFDKAR). The short motif at 5 to 7 (ARL) is the PDZ-binding; involved in localization to the apical cell membrane element. Residues 7-27 (LPYVALDVLCVVLAGLPFAIL) form a helical membrane-spanning segment. Topologically, residues 28-53 (TSRHTPFQRGIFCNDESIKYPYKEDT) are extracellular. A helical membrane pass occupies residues 54 to 74 (IPYALLGGIMIPFSIVVMIIG). Residues 75-94 (ETLSVYCNLLHSNSFIRNNY) are Cytoplasmic-facing. Residues 95–115 (IATIYKSIGTFLFGAAASQSL) form a helical membrane-spanning segment. Over 116–165 (TDIAKYSIGRLRPHFLSVCDPDWSKVNCSDGYIEYYVCRGNAEKVKEGRL) the chain is Extracellular. A phosphatase sequence motif I region spans residues 120-128 (KYSIGRLRP). Asn142 carries an N-linked (GlcNAc...) asparagine glycan. A helical membrane pass occupies residues 166 to 186 (SFYSGHSSFSMYCMVFVALYL). Residues 168-171 (YSGH) are phosphatase sequence motif II. His171 functions as the Proton donors in the catalytic mechanism. The Cytoplasmic segment spans residues 187–199 (QARMKGDWARLLR). A helical transmembrane segment spans residues 200-220 (PTLQFGLVAASIYVGLSRISD). Residues 216–227 (SRISDYKHHWSD) form a phosphatase sequence motif III region. Residues 221–229 (YKHHWSDVL) lie on the Extracellular side of the membrane. The active-site Nucleophile is the His223. Residues 230–250 (TGLIQGAIVAILVAVYVSDFF) traverse the membrane as a helical segment. Over 251–285 (KARNSPFQERKEEDSHTTLHETPTAGNHYRSNHQP) the chain is Cytoplasmic. A compositionally biased stretch (basic and acidic residues) spans 260–269 (RKEEDSHTTL). Positions 260–285 (RKEEDSHTTLHETPTAGNHYRSNHQP) are disordered.

This sequence belongs to the PA-phosphatase related phosphoesterase family. In terms of assembly, forms functional homodimers and homooligomers that are not required for substrate recognition and catalytic activity. Can also form heterooligomers with PLPP2 and PLPP3. Post-translationally, N-glycosylated. N-linked sugars are of the complex type. N-glycosylation is not required for the phosphatase activity.

It localises to the cell membrane. The protein localises to the apical cell membrane. It is found in the membrane raft. The protein resides in the membrane. Its subcellular location is the caveola. It carries out the reaction a 1,2-diacyl-sn-glycero-3-phosphate + H2O = a 1,2-diacyl-sn-glycerol + phosphate. The catalysed reaction is 1,2-dihexadecanoyl-sn-glycero-3-phosphate + H2O = 1,2-dihexadecanoyl-sn-glycerol + phosphate. It catalyses the reaction 1,2-di-(9Z-octadecenoyl)-sn-glycero-3-phosphate + H2O = 1,2-di-(9Z-octadecenoyl)-sn-glycerol + phosphate. The enzyme catalyses a monoacyl-sn-glycero-3-phosphate + H2O = a monoacylglycerol + phosphate. It carries out the reaction (9Z)-octadecenoyl-sn-glycero-3-phosphate + H2O = (9Z-octadecenoyl)-glycerol + phosphate. The catalysed reaction is a 1-acyl-sn-glycero-3-phosphate + H2O = a 1-acyl-sn-glycerol + phosphate. It catalyses the reaction 1-(9Z-octadecenoyl)-sn-glycero-3-phosphate + H2O = 1-(9Z-octadecenoyl)-sn-glycerol + phosphate. The enzyme catalyses a 1,2-diacyl-sn-glycerol 3-diphosphate + H2O = a 1,2-diacyl-sn-glycero-3-phosphate + phosphate + H(+). It carries out the reaction sphing-4-enine 1-phosphate + H2O = sphing-4-enine + phosphate. The catalysed reaction is an N-acylsphing-4-enine 1-phosphate + H2O = an N-acylsphing-4-enine + phosphate. It catalyses the reaction N-(octanoyl)-sphing-4-enine-1-phosphate + H2O = N-octanoylsphing-4-enine + phosphate. The enzyme catalyses N-(9Z-octadecenoyl)-ethanolamine phosphate + H2O = N-(9Z-octadecenoyl) ethanolamine + phosphate. It carries out the reaction 1-hexadecanoyl-2-(9Z-octadecenoyl)-sn-glycero-3-phosphate + H2O = 1-hexadecanoyl-2-(9Z-octadecenoyl)-sn-glycerol + phosphate. It participates in lipid metabolism; phospholipid metabolism. With respect to regulation, magnesium-independent phospholipid phosphatase. Insensitive to N-ethylmaleimide. In terms of biological role, magnesium-independent phospholipid phosphatase of the plasma membrane that catalyzes the dephosphorylation of a variety of glycerolipid and sphingolipid phosphate esters including phosphatidate/PA, lysophosphatidate/LPA, diacylglycerol pyrophosphate/DGPP, sphingosine 1-phosphate/S1P and ceramide 1-phosphate/C1P. Also acts on N-oleoyl ethanolamine phosphate/N-(9Z-octadecenoyl)-ethanolamine phosphate, a potential physiological compound. Through its extracellular phosphatase activity allows both the hydrolysis and the cellular uptake of these bioactive lipid mediators from the milieu, regulating signal transduction in different cellular processes. It is for instance essential for the extracellular hydrolysis of S1P and subsequent conversion into intracellular S1P. Involved in the regulation of inflammation, platelets activation, cell proliferation and migration among other processes. May also have an intracellular activity to regulate phospholipid-mediated signaling pathways. The polypeptide is Phospholipid phosphatase 1 (Cavia porcellus (Guinea pig)).